Here is a 532-residue protein sequence, read N- to C-terminus: 2,3-bisphosphoglycerate-independent phosphoglycerate mutase (532 aa).

Mn(2+) is bound by residues Asp15 and Ser65. The active-site Phosphoserine intermediate is the Ser65. Substrate-binding positions include His126, Arg156–Asp157, Arg188, Arg194, Arg258–Arg261, and Lys331. Mn(2+) contacts are provided by Asp398, His402, Asp439, His440, and His457.

It belongs to the BPG-independent phosphoglycerate mutase family. In terms of assembly, monomer. Mn(2+) is required as a cofactor.

It carries out the reaction (2R)-2-phosphoglycerate = (2R)-3-phosphoglycerate. It functions in the pathway carbohydrate degradation; glycolysis; pyruvate from D-glyceraldehyde 3-phosphate: step 3/5. In terms of biological role, catalyzes the interconversion of 2-phosphoglycerate and 3-phosphoglycerate. The chain is 2,3-bisphosphoglycerate-independent phosphoglycerate mutase from Synechocystis sp. (strain ATCC 27184 / PCC 6803 / Kazusa).